We begin with the raw amino-acid sequence, 447 residues long: N-succinylarginine dihydrolase (447 aa).

Residues 19-28, asparagine 110, and 137-138 contribute to the substrate site; these read AGLSFGNEAS and HR. The active site involves glutamate 174. A substrate-binding site is contributed by arginine 212. The active site involves histidine 248. 2 residues coordinate substrate: aspartate 250 and asparagine 359. Cysteine 365 acts as the Nucleophile in catalysis.

The protein belongs to the succinylarginine dihydrolase family. As to quaternary structure, homodimer.

It carries out the reaction N(2)-succinyl-L-arginine + 2 H2O + 2 H(+) = N(2)-succinyl-L-ornithine + 2 NH4(+) + CO2. It participates in amino-acid degradation; L-arginine degradation via AST pathway; L-glutamate and succinate from L-arginine: step 2/5. In terms of biological role, catalyzes the hydrolysis of N(2)-succinylarginine into N(2)-succinylornithine, ammonia and CO(2). The sequence is that of N-succinylarginine dihydrolase from Escherichia coli O1:K1 / APEC.